The chain runs to 149 residues: Transcriptional repressor NrdR (149 aa).

Residues 3-34 (CPFCFAVDTKVIDSRLVGEGSSVRRRRQCLVC) fold into a zinc finger. Residues 49–139 (PRVVKSNDVR…VYRSFEDIKE (91 aa)) form the ATP-cone domain.

It belongs to the NrdR family. The cofactor is Zn(2+).

In terms of biological role, negatively regulates transcription of bacterial ribonucleotide reductase nrd genes and operons by binding to NrdR-boxes. The sequence is that of Transcriptional repressor NrdR from Shigella flexneri.